The following is a 247-amino-acid chain: Homeobox-leucine zipper protein HOX17 (247 aa).

The interval 58 to 81 (ERAGLRGGGGSDEEDGGCGIDGSR) is disordered. A DNA-binding region (homeobox) is located at residues 79–138 (GSRKKLRLSKDQSAVLEDSFREHPTLNPRQKATLAQQLGLRPRQVEVWFQNRRARTKLKQ). The tract at residues 137–182 (KQTEVDCEFLKRCCETLTEENRRLQKEVQELRALKLVSPHLYMNMS) is leucine-zipper.

It belongs to the HD-ZIP homeobox family. Class II subfamily. Expressed in seedlings, roots, stems, leaf sheaths and blades and panicles.

It localises to the nucleus. Its function is as follows. Probable transcription factor. This is Homeobox-leucine zipper protein HOX17 (HOX17) from Oryza sativa subsp. indica (Rice).